Here is a 1117-residue protein sequence, read N- to C-terminus: Telomerase reverse transcriptase (1117 aa).

A TEN region spans residues 1-191; it reads MQKINNINNN…VKQKKWYKNN (191 aa). An RBD region spans residues 217–519; that stretch reads NQYIYPEIQR…ENLEKVEEKL (303 aa). A Reverse transcriptase domain is found at 517–881; it reads EKLIPEDSFQ…NECQWIGKSI (365 aa). Residues 520–887 are RT; sequence IPEDSFQKYP…GKSIDMNTLE (368 aa). Asp618 is a binding site for Mg(2+). The interval 638–742 is TRAP; sequence SDLIQDTYFI…NQDKPRCITK (105 aa). 2 residues coordinate Mg(2+): Asp815 and Asp816. A CTE region spans residues 888 to 1117; the sequence is IKSIQKQTQQ…SAKSNQQNTN (230 aa).

It belongs to the reverse transcriptase family. Telomerase subfamily. As to quaternary structure, component of the telomerase holoenzyme complex, composed of the catalytic core (the catalytic subunit TERT, the telomerase RNA template component TER and TAP65/p65), which is associated with two heterotrimeric subcomplexes: (i) the replication protein A (RPA)-related subcomplex, composed of TEB1, RPA2/TEB2 and RPA3/TEB3 and (ii) the CST-like subcomplex, composed of TAP75/p75, TAP45/p45 and TAP19/p19. TEB1 and the CST-like subcomplex are tethered to the catalytic core by TAP50/p50.

The protein localises to the nucleus. It is found in the chromosome. Its subcellular location is the telomere. The catalysed reaction is DNA(n) + a 2'-deoxyribonucleoside 5'-triphosphate = DNA(n+1) + diphosphate. In terms of biological role, catalytic component of telomerase, an essential ribonucleoprotein enzyme that copies new telomeric repeats onto chromosome ends by repetitively synthesizing the short telomere-repeat sequence 5'-TTGGGG-3' using an RNA template component TER. TERT is a reverse transcriptase that adds simple sequence repeats to chromosome ends by copying a template sequence within the RNA component of the enzyme. The chain is Telomerase reverse transcriptase from Tetrahymena thermophila (strain SB210).